The following is a 220-amino-acid chain: Protein-L-isoaspartate O-methyltransferase (220 aa).

Residue Ser-68 is part of the active site.

The protein belongs to the methyltransferase superfamily. L-isoaspartyl/D-aspartyl protein methyltransferase family.

The protein resides in the cytoplasm. The catalysed reaction is [protein]-L-isoaspartate + S-adenosyl-L-methionine = [protein]-L-isoaspartate alpha-methyl ester + S-adenosyl-L-homocysteine. Its function is as follows. Catalyzes the methyl esterification of L-isoaspartyl residues in peptides and proteins that result from spontaneous decomposition of normal L-aspartyl and L-asparaginyl residues. It plays a role in the repair and/or degradation of damaged proteins. This is Protein-L-isoaspartate O-methyltransferase from Dictyoglomus thermophilum (strain ATCC 35947 / DSM 3960 / H-6-12).